Here is a 2275-residue protein sequence, read N- to C-terminus: Serine-rich adhesin for platelets (2275 aa).

The N-terminal stretch at Met-1–Phe-89 is a signal peptide. Residues Ala-90 to Asp-264 form a serine-rich repeat region 1, SRR1 region. Residues Leu-100–Asn-111 show a composition bias toward polar residues. 2 disordered regions span residues Leu-100–Thr-229 and Asn-751–Gly-2247. Low complexity predominate over residues Ser-112–Thr-128. Positions Lys-129–Asp-140 are enriched in polar residues. Residues Val-150–Thr-229 show a composition bias toward low complexity. Residues Asn-265–Asn-751 are non-repeat region (NRR). Composition is skewed to low complexity over residues Ser-752–Ser-1392 and Ser-1402–Glu-2218. Residues Ser-752–Thr-2236 are serine-rich repeat region 2, SRR2. Positions Leu-2233–Gly-2237 match the LPXTG sorting signal motif. Residue Thr-2236 is modified to Pentaglycyl murein peptidoglycan amidated threonine. A propeptide spans Gly-2237–Ala-2275 (removed by sortase).

Belongs to the serine-rich repeat protein (SRRP) family. In terms of assembly, interacts with human gp-340 (DMBT1). In terms of processing, proteolytically cleaved by a metalloprotease. Glycosylated. It is probable that most of the Ser residues in SSR1 and SSR2 are O-GlcNAcylated. Sequential glycosylation by sugar transferases are able to generate complex sugar polymorphisms.

The protein localises to the secreted. Its subcellular location is the cell wall. Functionally, mediates binding to human platelets, possibly through a receptor-ligand interaction. Probably associated with virulence in endovascular infection. Interacts with host (human) gp-340 via the non-repeat region (NRR or binding region). Binding is inhibited by N-acetylneuraminic acid (NeuAc). This is Serine-rich adhesin for platelets (sraP) from Staphylococcus aureus (strain MW2).